Reading from the N-terminus, the 313-residue chain is Ribosomal RNA small subunit methyltransferase H (313 aa).

Residues 31–33 (GGH), Asp51, Phe77, Asp95, and Gln102 each bind S-adenosyl-L-methionine.

Belongs to the methyltransferase superfamily. RsmH family.

The protein resides in the cytoplasm. The catalysed reaction is cytidine(1402) in 16S rRNA + S-adenosyl-L-methionine = N(4)-methylcytidine(1402) in 16S rRNA + S-adenosyl-L-homocysteine + H(+). Specifically methylates the N4 position of cytidine in position 1402 (C1402) of 16S rRNA. The chain is Ribosomal RNA small subunit methyltransferase H from Xylella fastidiosa (strain 9a5c).